Here is a 314-residue protein sequence, read N- to C-terminus: N-myc-interactor (314 aa).

Residues 1 to 24 (MDADKDNIKQACDERSAEMDDMRG) form a disordered region. At Ser-16 the chain carries Phosphoserine. Residues 31–65 (VHEIMSENKELDEEIKKLEAELQSDAREFQIKENV) are a coiled coil. 2 NID domains span residues 104 to 193 (GQAL…GEVE) and 202 to 293 (RSAV…EVEV).

It belongs to the NMI family. As to quaternary structure, interacts with MYCN and MYC, as well as with other transcription factors with a Zip, HLH or a HLH-Zip motif. Interacts with all STAT proteins except STAT2. Interacts with IRF7, the interaction is direct and leads to the inhibition of IRF7-mediated type I IFN production. Interacts (via coiled-coil domain) with TRIM21 (via the SPRY domain); the interaction leads to 'Lys-63'-linked ubiquitination of NMI. Interacts with IFI35; the interaction is direct and is facilitated by TRIM21. Interacts with TLR4; the interaction is direct and leads to NF-kappa-B activation. In terms of processing, may be ubiquitinated. Expressed in macrophages.

Its subcellular location is the cytoplasm. It localises to the nucleus. The protein resides in the secreted. Its function is as follows. Acts as a signaling pathway regulator involved in innate immune system response. In response to interleukin 2/IL2 and interferon IFN-gamma/IFNG, interacts with signal transducer and activator of transcription/STAT which activate the transcription of downstream genes involved in a multitude of signals for development and homeostasis. Enhances the recruitment of CBP/p300 coactivators to STAT1 and STAT5, resulting in increased STAT1- and STAT5-dependent transcription. In response to interferon IFN-alpha, associates in a complex with transcriptional regulator IFI35 to regulate immune response; the complex formation prevents proteasome-mediated degradation of IFI35. In complex with IFI35, negatively regulates nuclear factor NF-kappa-B signaling by inhibiting the nuclear translocation, activation and transcription of NF-kappa-B subunit p65/RELA, resulting in the inhibition of endothelial cell proliferation, migration and re-endothelialization of injured arteries. Negatively regulates virus-triggered type I interferon/IFN production by inducing proteosome-dependent degradation of IRF7, a transcriptional regulator of type I IFN, thereby interfering with cellular antiviral responses. Beside its role as an intracellular signaling pathway regulator, also functions extracellularly as damage-associated molecular patterns (DAMPs) to promote inflammation, when actively released by macrophage to the extracellular space during cell injury or pathogen invasion. Macrophage-secreted NMI activates NF-kappa-B signaling in adjacent macrophages through Toll-like receptor 4/TLR4 binding and activation, thereby inducing NF-kappa-B translocation from the cytoplasm into the nucleus which promotes the release of pro-inflammatory cytokines. The polypeptide is N-myc-interactor (Mus musculus (Mouse)).